We begin with the raw amino-acid sequence, 548 residues long: CTP synthase (548 aa).

The tract at residues 1–270 (MNRRSCAFIF…DTKISALLGC (270 aa)) is amidoligase domain. S17 contributes to the CTP binding site. S17 contacts UTP. ATP-binding positions include 18 to 23 (SIGKGL) and D75. Residues D75 and E143 each contribute to the Mg(2+) site. CTP is bound by residues 150 to 152 (DIE), 190 to 195 (KTKPSQ), and K227. UTP-binding positions include 190-195 (KTKPSQ) and K227. The region spanning 305 to 548 (YSGLCDAYIS…VRAGLLRKYS (244 aa)) is the Glutamine amidotransferase type-1 domain. G356 is a binding site for L-glutamine. C383 (nucleophile; for glutamine hydrolysis) is an active-site residue. Residues 384-387 (FGFQ), E407, and R475 contribute to the L-glutamine site. Residues H521 and E523 contribute to the active site.

It belongs to the CTP synthase family. Homotetramer.

It carries out the reaction UTP + L-glutamine + ATP + H2O = CTP + L-glutamate + ADP + phosphate + 2 H(+). It catalyses the reaction L-glutamine + H2O = L-glutamate + NH4(+). The catalysed reaction is UTP + NH4(+) + ATP = CTP + ADP + phosphate + 2 H(+). The protein operates within pyrimidine metabolism; CTP biosynthesis via de novo pathway; CTP from UDP: step 2/2. With respect to regulation, allosterically activated by GTP, when glutamine is the substrate; GTP has no effect on the reaction when ammonia is the substrate. The allosteric effector GTP functions by stabilizing the protein conformation that binds the tetrahedral intermediate(s) formed during glutamine hydrolysis. Inhibited by the product CTP, via allosteric rather than competitive inhibition. Functionally, catalyzes the ATP-dependent amination of UTP to CTP with either L-glutamine or ammonia as the source of nitrogen. Regulates intracellular CTP levels through interactions with the four ribonucleotide triphosphates. The chain is CTP synthase from Neorickettsia sennetsu (strain ATCC VR-367 / Miyayama) (Ehrlichia sennetsu).